Here is a 416-residue protein sequence, read N- to C-terminus: Exodeoxyribonuclease 7 large subunit (416 aa).

The protein belongs to the XseA family. As to quaternary structure, heterooligomer composed of large and small subunits.

Its subcellular location is the cytoplasm. It catalyses the reaction Exonucleolytic cleavage in either 5'- to 3'- or 3'- to 5'-direction to yield nucleoside 5'-phosphates.. Functionally, bidirectionally degrades single-stranded DNA into large acid-insoluble oligonucleotides, which are then degraded further into small acid-soluble oligonucleotides. The sequence is that of Exodeoxyribonuclease 7 large subunit from Nitratiruptor sp. (strain SB155-2).